We begin with the raw amino-acid sequence, 547 residues long: RNA polymerase sigma factor sigF, chloroplastic (547 aa).

Over residues 1 to 17 (MEATRNLVSSSPSFQTK) the composition is skewed to polar residues. Disordered regions lie at residues 1-28 (MEAT…SSPS) and 54-79 (FPAS…DDRT). The transit peptide at 1-55 (MEATRNLVSSSPSFQTKTHLKSSYSSPSSVVMLHDQTTTPVVNSRHLNSLSRHFP) directs the protein to the chloroplast. Over residues 62–79 (EPREESRPLSHALRDDRT) the composition is skewed to basic and acidic residues. Ser94, Ser95, Ser174, Ser176, Ser177, and Ser180 each carry phosphoserine; by CK2. The segment at 163–226 (ANPSDNIKDS…QKTSAKKKYK (64 aa)) is disordered. Residues 172–181 (SLSTSSSMSL) are compositionally biased toward low complexity. Thr249 is subject to Phosphothreonine; by CK2. The Polymerase core binding motif lies at 335 to 348 (DLLQEGSMGLMKSV). A DNA-binding region (H-T-H motif) is located at residues 505–524 (LSEIGEIYGLSKERVRQLES).

Belongs to the sigma-70 factor family. As to quaternary structure, interacts (via N-terminus) with DG1 (via C-terminus). Phosphorylated to acquire sigma activity; site-specific phosphorylation regulates promoter affinity. Phosphorylation at Ser-174 by chloroplastic CK2 requires prior phosphorylation at Ser-177. Phosphorylation at either Ser-94, Ser-95 or Ser-174 is required for sigma activation. Expressed in seedling, accumulating progressively. Present in leaves but not in roots.

It localises to the plastid. The protein resides in the chloroplast. In terms of biological role, sigma factors are initiation factors that promote the attachment of plastid-encoded RNA polymerase (PEP) to specific initiation sites and are then released. Regulates transcription in chloroplast in a DG1-dependent manner. Involved in light-dependent chloroplast development. Required during early plant development and primary leaf formation. This chain is RNA polymerase sigma factor sigF, chloroplastic (SIGF), found in Arabidopsis thaliana (Mouse-ear cress).